Reading from the N-terminus, the 162-residue chain is CASP-like protein BLE3 (162 aa).

Over 1-7 the chain is Cytoplasmic; that stretch reads MAKVHRL. The chain crosses the membrane as a helical span at residues 8-28; it reads MNAVLRLAAAAAAATAAVVMV. Over 29-50 the chain is Extracellular; it reads TSRETTSFFGIQMEAKYSYTPS. Residues 51–71 traverse the membrane as a helical segment; sequence FIFFVVAYAVAAAYSLLVLAV. At 72–85 the chain is on the cytoplasmic side; it reads PAGSALSRLALTTD. Residues 86–106 form a helical membrane-spanning segment; that stretch reads VVLGMVLAGAVASAGAISDIA. Residues 107-128 lie on the Extracellular side of the membrane; sequence KNGNSHAGWLPVCGQIHAYCNH. The chain crosses the membrane as a helical span at residues 129–149; it reads VMAALIAGFVALAVHFVVVMY. Residues 150–162 lie on the Cytoplasmic side of the membrane; that stretch reads SLHIVTDVICPCH.

The protein belongs to the Casparian strip membrane proteins (CASP) family. As to quaternary structure, homodimer and heterodimers.

It is found in the cell membrane. Functionally, involved in cell elongation in rice through dual regulation by brassinolide and auxin. This Oryza sativa subsp. indica (Rice) protein is CASP-like protein BLE3 (BLE3).